A 464-amino-acid chain; its full sequence is ERO1-like protein alpha (464 aa).

An N-terminal signal peptide occupies residues 1–23 (MGRGWGLLVGLLGVVWLLRSGQG). Intrachain disulfides connect Cys35–Cys48, Cys37–Cys46, Cys85–Cys387, Cys94–Cys99, Cys94–Cys130, Cys99–Cys104, Cys207–Cys237, and Cys390–Cys393. A phosphoserine mark is found at Ser106, Ser142, and Ser144. FAD-binding residues include Arg186, Thr188, and Trp199. FAD-binding residues include Ser248 and His251. Asn276 is a glycosylation site (N-linked (GlcNAc...) asparagine). Residues Arg283 and Arg296 each coordinate FAD. Asn380 carries an N-linked (GlcNAc...) asparagine glycan.

The protein belongs to the EROs family. Predominantly monomer. May function both as a monomer and a homodimer. Interacts with PDILT. Interacts with ERP44; the interaction results in retention of ERO1A in the endoplasmic reticulum. FAD is required as a cofactor. Post-translationally, N-glycosylated. The Cys-94/Cys-99 and Cys-390/Cys-393 disulfide bonds constitute the redox-active center. The Cys-94/Cys-99 disulfide bond may accept electron from P4HB and funnel them to the active site disulfide Cys-390/Cys-393. The regulatory Cys-99/Cys-104 disulfide bond stabilizes the other regulatory bond Cys-94/Cys-130. In terms of processing, phosphorylated on Ser-144 by FAM20C in the Golgi which increases its enzymatic activity. Phosphorylation is induced by lactation. It is also induced by hypoxia and reductive stress.

It localises to the endoplasmic reticulum membrane. Its subcellular location is the golgi apparatus lumen. It is found in the secreted. The protein localises to the cell projection. The protein resides in the dendrite. Its activity is regulated as follows. Enzyme activity is tightly regulated to prevent the accumulation of reactive oxygen species in the endoplasmic reticulum. Reversibly down-regulated by the formation of disulfide bonds between the active site Cys-94 and Cys-130, and between Cys-99 and Cys-104. Glutathione may be required to regulate its activity in the endoplasmic reticulum. In terms of biological role, oxidoreductase involved in disulfide bond formation in the endoplasmic reticulum. Efficiently reoxidizes P4HB/PDI, the enzyme catalyzing protein disulfide formation, in order to allow P4HB to sustain additional rounds of disulfide formation. Following P4HB reoxidation, passes its electrons to molecular oxygen via FAD, leading to the production of reactive oxygen species (ROS) in the cell. Required for the proper folding of immunoglobulins. Plays an important role in ER stress-induced, CHOP-dependent apoptosis by activating the inositol 1,4,5-trisphosphate receptor IP3R1. This Rattus norvegicus (Rat) protein is ERO1-like protein alpha.